The primary structure comprises 325 residues: MENTTQLLLRQSDALAGRNVLVVDANDPALKTLSVDATVHVHADDYTIGAQQWAPAPTVPAGTDLLVLPLSKSLDRLRFLLNWLAGEIAEPTELWLIGPTKGGIRGALKYLEAHVDGTMLEDSARHCKLYSGLLQPGEKQSLNAWGTVLEVADQEAVSYPGVFSHGRLDEGSALLLQAMEGHNLGKPGKVIDMGCGAGVISVWLARHGWQVQGVDVSASAVTASTESLARNGLQGRIMGGDLFSPIQGRVDMVVTNPPFHDRRQRTTDITRRLIAEAPTYLKPGGVLWLVANRELPYVQWLDDAFSHVQVASETTRFRVYRAVLS.

Belongs to the methyltransferase superfamily. RsmC family. As to quaternary structure, monomer.

It localises to the cytoplasm. The catalysed reaction is guanosine(1207) in 16S rRNA + S-adenosyl-L-methionine = N(2)-methylguanosine(1207) in 16S rRNA + S-adenosyl-L-homocysteine + H(+). In terms of biological role, specifically methylates the guanine in position 1207 of 16S rRNA in the 30S particle. This chain is Ribosomal RNA small subunit methyltransferase C, found in Alcanivorax borkumensis (strain ATCC 700651 / DSM 11573 / NCIMB 13689 / SK2).